Reading from the N-terminus, the 260-residue chain is Hydroxyethylthiazole kinase (260 aa).

Residue M38 coordinates substrate. ATP is bound by residues R114 and T159. G186 contributes to the substrate binding site.

Belongs to the Thz kinase family. Requires Mg(2+) as cofactor.

The catalysed reaction is 5-(2-hydroxyethyl)-4-methylthiazole + ATP = 4-methyl-5-(2-phosphooxyethyl)-thiazole + ADP + H(+). It functions in the pathway cofactor biosynthesis; thiamine diphosphate biosynthesis; 4-methyl-5-(2-phosphoethyl)-thiazole from 5-(2-hydroxyethyl)-4-methylthiazole: step 1/1. Catalyzes the phosphorylation of the hydroxyl group of 4-methyl-5-beta-hydroxyethylthiazole (THZ). This Helicobacter pylori (strain G27) protein is Hydroxyethylthiazole kinase.